Consider the following 1585-residue polypeptide: uncharacterized protein (1585 aa).

A coiled-coil region spans residues 12-59; it reads DKISRKLRMIQGNAERLKRAANGPLIFEAEDRTERVMRQIDRSANRLT. Disordered regions lie at residues 586–627 and 645–692; these read PKRT…SLPR and IRRR…NPTR. The span at 618–627 shows a compositional bias: polar residues; sequence TATGPTSLPR. Over residues 645-655 the composition is skewed to basic residues; the sequence is IRRRRGKRVLG. A compositionally biased stretch (polar residues) spans 661 to 672; the sequence is NRMNPSDSSIAV. Residues serine 970 and serine 972 each carry the phosphoserine modification.

It to B.subtilis XkdO.

This is an uncharacterized protein from Bacillus subtilis (strain 168).